The primary structure comprises 336 residues: Phospho-N-acetylmuramoyl-pentapeptide-transferase (336 aa).

The next 10 membrane-spanning stretches (helical) occupy residues L3–I23, G53–I73, S78–L98, L118–I138, V143–V163, G174–A194, F200–N220, V226–A246, W251–V271, and A316–F336.

It belongs to the glycosyltransferase 4 family. MraY subfamily. The cofactor is Mg(2+).

The protein localises to the cell membrane. The catalysed reaction is UDP-N-acetyl-alpha-D-muramoyl-L-alanyl-gamma-D-glutamyl-L-lysyl-D-alanyl-D-alanine + di-trans,octa-cis-undecaprenyl phosphate = Mur2Ac(oyl-L-Ala-gamma-D-Glu-L-Lys-D-Ala-D-Ala)-di-trans,octa-cis-undecaprenyl diphosphate + UMP. The protein operates within cell wall biogenesis; peptidoglycan biosynthesis. Functionally, catalyzes the initial step of the lipid cycle reactions in the biosynthesis of the cell wall peptidoglycan: transfers peptidoglycan precursor phospho-MurNAc-pentapeptide from UDP-MurNAc-pentapeptide onto the lipid carrier undecaprenyl phosphate, yielding undecaprenyl-pyrophosphoryl-MurNAc-pentapeptide, known as lipid I. This is Phospho-N-acetylmuramoyl-pentapeptide-transferase from Streptococcus pyogenes serotype M1.